A 252-amino-acid chain; its full sequence is tRNA (guanine-N(1)-)-methyltransferase (252 aa).

Residues G113 and 133–138 (LGDYVL) each bind S-adenosyl-L-methionine.

This sequence belongs to the RNA methyltransferase TrmD family. Homodimer.

It localises to the cytoplasm. The enzyme catalyses guanosine(37) in tRNA + S-adenosyl-L-methionine = N(1)-methylguanosine(37) in tRNA + S-adenosyl-L-homocysteine + H(+). Functionally, specifically methylates guanosine-37 in various tRNAs. The sequence is that of tRNA (guanine-N(1)-)-methyltransferase from Stenotrophomonas maltophilia (strain R551-3).